The sequence spans 447 residues: Mannose/glucose-specific lectin (447 aa).

3 tandem repeats follow at residues 1–149 (SLKG…VQPV), 150–295 (PHGT…VKPR), and 296–447 (DVEG…DTAV). Residues 1–447 (SLKGMISVGP…GIFVKPDTAV (447 aa)) are 3 X approximate tandem repeats. Jacalin-type lectin domains are found at residues 5–148 (MISV…FVQP), 153–294 (TISF…YVKP), and 300–443 (SISI…FVKP).

This sequence belongs to the jacalin lectin family. As to quaternary structure, homodimer. In terms of processing, the N-terminus is blocked.

Functionally, mannose/glucose specific lectin. Shows agglutinating activity against rabbit erythrocytes. In Parkia platycephala, this protein is Mannose/glucose-specific lectin.